Consider the following 880-residue polypeptide: Alanine--tRNA ligase (880 aa).

Histidine 566, histidine 570, cysteine 668, and histidine 672 together coordinate Zn(2+).

It belongs to the class-II aminoacyl-tRNA synthetase family. Requires Zn(2+) as cofactor.

Its subcellular location is the cytoplasm. It catalyses the reaction tRNA(Ala) + L-alanine + ATP = L-alanyl-tRNA(Ala) + AMP + diphosphate. In terms of biological role, catalyzes the attachment of alanine to tRNA(Ala) in a two-step reaction: alanine is first activated by ATP to form Ala-AMP and then transferred to the acceptor end of tRNA(Ala). Also edits incorrectly charged Ser-tRNA(Ala) and Gly-tRNA(Ala) via its editing domain. This chain is Alanine--tRNA ligase, found in Parafrankia sp. (strain EAN1pec).